The following is a 701-amino-acid chain: Elongation factor G (701 aa).

The tr-type G domain occupies 8 to 291 (SRYRNIGIVA…AVIDYLPAPV (284 aa)). GTP contacts are provided by residues 17–24 (AHVDAGKT), 89–93 (DTPGH), and 143–146 (NKMD).

The protein belongs to the TRAFAC class translation factor GTPase superfamily. Classic translation factor GTPase family. EF-G/EF-2 subfamily.

It localises to the cytoplasm. Its function is as follows. Catalyzes the GTP-dependent ribosomal translocation step during translation elongation. During this step, the ribosome changes from the pre-translocational (PRE) to the post-translocational (POST) state as the newly formed A-site-bound peptidyl-tRNA and P-site-bound deacylated tRNA move to the P and E sites, respectively. Catalyzes the coordinated movement of the two tRNA molecules, the mRNA and conformational changes in the ribosome. The polypeptide is Elongation factor G (Pseudomonas fluorescens (strain SBW25)).